Here is a 471-residue protein sequence, read N- to C-terminus: MSANIGKIVQVIGAVVDVEFPSGNLPNILSALDIKNPNNSDAPQLVCEVAQHLGDNVVRTIAMDATEGLVRGMEAVDTGKPIMVPVGKASLGRIMNVVGRPVDEMGPIKTDKYLPIHRPAPEFTEQNTKVELLETGIKVVDLLIPFPKGGKMGLFGGAGVGKTVILMEMINNIAKQHGGISVFAGVGERTREGNDLYHEMKDAGVLEKAALIYGQMNEPPGARARVALTALACAEYFRDIENQDVLLFVDNIFRFTQAGSEVSALLGRMPSAVGYQPTLGTDLGGLQERITSTVKGSITSVQAVYVPADDLTDPAPATTFSHLDGTLVLSRQIAELGIYPAVDPLDSTSRILDPNVVGPEHYSVARAVQQVLQKYKDLQDIIAILGMDELSDEDKLTVARARRIQRFLSQPFHVAETFTGTPGVYVKLEDTIKAFRGILNGDFDHLAEGDFYMVGGIETALEKYKKRQEQQ.

156–163 is an ATP binding site; that stretch reads GGAGVGKT.

The protein belongs to the ATPase alpha/beta chains family. F-type ATPases have 2 components, CF(1) - the catalytic core - and CF(0) - the membrane proton channel. CF(1) has five subunits: alpha(3), beta(3), gamma(1), delta(1), epsilon(1). CF(0) has three main subunits: a(1), b(2) and c(9-12). The alpha and beta chains form an alternating ring which encloses part of the gamma chain. CF(1) is attached to CF(0) by a central stalk formed by the gamma and epsilon chains, while a peripheral stalk is formed by the delta and b chains.

It localises to the cell inner membrane. The catalysed reaction is ATP + H2O + 4 H(+)(in) = ADP + phosphate + 5 H(+)(out). Produces ATP from ADP in the presence of a proton gradient across the membrane. The catalytic sites are hosted primarily by the beta subunits. This chain is ATP synthase subunit beta, found in Nitratidesulfovibrio vulgaris (strain DSM 19637 / Miyazaki F) (Desulfovibrio vulgaris).